A 179-amino-acid chain; its full sequence is Large ribosomal subunit protein uL5 (179 aa).

Belongs to the universal ribosomal protein uL5 family. Part of the 50S ribosomal subunit; part of the 5S rRNA/L5/L18/L25 subcomplex. Contacts the 5S rRNA and the P site tRNA. Forms a bridge to the 30S subunit in the 70S ribosome.

In terms of biological role, this is one of the proteins that bind and probably mediate the attachment of the 5S RNA into the large ribosomal subunit, where it forms part of the central protuberance. In the 70S ribosome it contacts protein S13 of the 30S subunit (bridge B1b), connecting the 2 subunits; this bridge is implicated in subunit movement. Contacts the P site tRNA; the 5S rRNA and some of its associated proteins might help stabilize positioning of ribosome-bound tRNAs. This chain is Large ribosomal subunit protein uL5, found in Bdellovibrio bacteriovorus (strain ATCC 15356 / DSM 50701 / NCIMB 9529 / HD100).